The sequence spans 134 residues: Small ribosomal subunit protein uS8c (134 aa).

It belongs to the universal ribosomal protein uS8 family. In terms of assembly, part of the 30S ribosomal subunit.

It is found in the plastid. Its subcellular location is the chloroplast. In terms of biological role, one of the primary rRNA binding proteins, it binds directly to 16S rRNA central domain where it helps coordinate assembly of the platform of the 30S subunit. The polypeptide is Small ribosomal subunit protein uS8c (rps8) (Populus alba (White poplar)).